A 393-amino-acid chain; its full sequence is S-adenosylmethionine synthase (393 aa).

Histidine 16 lines the ATP pocket. A Mg(2+)-binding site is contributed by aspartate 18. Glutamate 44 contributes to the K(+) binding site. Residues glutamate 57 and glutamine 100 each contribute to the L-methionine site. Residues 100–110 (QSNDIAQGVDH) form a flexible loop region. ATP is bound by residues 167–169 (DAK), 238–239 (RF), aspartate 247, 253–254 (RK), alanine 270, and lysine 274. Aspartate 247 serves as a coordination point for L-methionine. An L-methionine-binding site is contributed by lysine 278.

It belongs to the AdoMet synthase family. As to quaternary structure, homotetramer; dimer of dimers. It depends on Mg(2+) as a cofactor. K(+) is required as a cofactor.

The protein localises to the cytoplasm. It carries out the reaction L-methionine + ATP + H2O = S-adenosyl-L-methionine + phosphate + diphosphate. It functions in the pathway amino-acid biosynthesis; S-adenosyl-L-methionine biosynthesis; S-adenosyl-L-methionine from L-methionine: step 1/1. Its function is as follows. Catalyzes the formation of S-adenosylmethionine (AdoMet) from methionine and ATP. The overall synthetic reaction is composed of two sequential steps, AdoMet formation and the subsequent tripolyphosphate hydrolysis which occurs prior to release of AdoMet from the enzyme. The chain is S-adenosylmethionine synthase from Albidiferax ferrireducens (strain ATCC BAA-621 / DSM 15236 / T118) (Rhodoferax ferrireducens).